The primary structure comprises 173 residues: NADH-ubiquinone oxidoreductase chain 6 (173 aa).

5 consecutive transmembrane segments (helical) span residues 1–21, 27–47, 48–68, 87–107, and 139–159; these read MTYFVLFLGLCFVLGGLAVAS, YGVVGLVLASVAGCGWFLSLG, ASFVSLVLFMVYLGGMLVVFV, VIGYGMGFAMVLVVGVVIGGF, and WGAGMFLVAGWGLLLTLFVVL.

Belongs to the complex I subunit 6 family.

It is found in the mitochondrion membrane. The enzyme catalyses a ubiquinone + NADH + 5 H(+)(in) = a ubiquinol + NAD(+) + 4 H(+)(out). Functionally, core subunit of the mitochondrial membrane respiratory chain NADH dehydrogenase (Complex I) that is believed to belong to the minimal assembly required for catalysis. Complex I functions in the transfer of electrons from NADH to the respiratory chain. The immediate electron acceptor for the enzyme is believed to be ubiquinone. This chain is NADH-ubiquinone oxidoreductase chain 6 (MT-ND6), found in Brachyramphus brevirostris (Kittlitz's murrelet).